Here is a 1296-residue protein sequence, read N- to C-terminus: Probable serine/threonine protein kinase IREH1 (1296 aa).

Disordered stretches follow at residues 1 to 274, 457 to 480, and 524 to 553; these read MVFK…SESP, SGAG…QEQH, and SPAL…VGSR. A compositionally biased stretch (low complexity) spans 10-32; that stretch reads SSKKSGSSSPDSSNSPRSVGSNS. Serine 32 carries the phosphoserine modification. 3 stretches are compositionally biased toward basic and acidic residues: residues 68-77, 101-112, and 178-208; these read DGLKKKDGSS, EVKKPPPPEVKE, and RKKE…RDSL. Residues 214 to 249 show a composition bias toward low complexity; the sequence is PPRSLSPTLPPSGSRLQNVASSSGTGRSEMSSGRSG. The C2H2-type; atypical zinc finger occupies 602 to 621; it reads CRICEEEVPTTHVEDHSRVC. Residues 724-750 are disordered; that stretch reads FGPKSDQGMTTSSASSMTPRSPIPTPR. Residues 730–740 show a composition bias toward polar residues; that stretch reads QGMTTSSASSM. The Protein kinase domain maps to 882-1171; it reads FEIIKPISRG…AAEVKQHIFF (290 aa). Residues 888–896 and lysine 911 each bind ATP; that span reads ISRGAFGRV. The Proton acceptor role is filled by aspartate 1005. Residue serine 1070 is modified to Phosphoserine. The AGC-kinase C-terminal domain maps to 1172–1277; that stretch reads KDINWDTLAR…KNLSQLASIN (106 aa). Residues 1214–1245 are disordered; that stretch reads PSGEVPDYSDADSMTNSSGCSSNHHEEGEAEE. The span at 1225 to 1235 shows a compositional bias: polar residues; the sequence is DSMTNSSGCSS. A compositionally biased stretch (basic and acidic residues) spans 1236-1245; it reads NHHEEGEAEE.

It belongs to the protein kinase superfamily. AGC Ser/Thr protein kinase family.

The catalysed reaction is L-seryl-[protein] + ATP = O-phospho-L-seryl-[protein] + ADP + H(+). The enzyme catalyses L-threonyl-[protein] + ATP = O-phospho-L-threonyl-[protein] + ADP + H(+). In terms of biological role, may be involved in root hair elongation. In Arabidopsis thaliana (Mouse-ear cress), this protein is Probable serine/threonine protein kinase IREH1.